Reading from the N-terminus, the 95-residue chain is Aspartyl/glutamyl-tRNA(Asn/Gln) amidotransferase subunit C (95 aa).

Belongs to the GatC family. As to quaternary structure, heterotrimer of A, B and C subunits.

The enzyme catalyses L-glutamyl-tRNA(Gln) + L-glutamine + ATP + H2O = L-glutaminyl-tRNA(Gln) + L-glutamate + ADP + phosphate + H(+). It carries out the reaction L-aspartyl-tRNA(Asn) + L-glutamine + ATP + H2O = L-asparaginyl-tRNA(Asn) + L-glutamate + ADP + phosphate + 2 H(+). Its function is as follows. Allows the formation of correctly charged Asn-tRNA(Asn) or Gln-tRNA(Gln) through the transamidation of misacylated Asp-tRNA(Asn) or Glu-tRNA(Gln) in organisms which lack either or both of asparaginyl-tRNA or glutaminyl-tRNA synthetases. The reaction takes place in the presence of glutamine and ATP through an activated phospho-Asp-tRNA(Asn) or phospho-Glu-tRNA(Gln). The polypeptide is Aspartyl/glutamyl-tRNA(Asn/Gln) amidotransferase subunit C (Acetivibrio thermocellus (strain ATCC 27405 / DSM 1237 / JCM 9322 / NBRC 103400 / NCIMB 10682 / NRRL B-4536 / VPI 7372) (Clostridium thermocellum)).